Here is a 325-residue protein sequence, read N- to C-terminus: Tetraacyldisaccharide 4'-kinase (325 aa).

Residue 53 to 60 participates in ATP binding; sequence SVGGNGKT.

Belongs to the LpxK family.

It carries out the reaction a lipid A disaccharide + ATP = a lipid IVA + ADP + H(+). It participates in glycolipid biosynthesis; lipid IV(A) biosynthesis; lipid IV(A) from (3R)-3-hydroxytetradecanoyl-[acyl-carrier-protein] and UDP-N-acetyl-alpha-D-glucosamine: step 6/6. In terms of biological role, transfers the gamma-phosphate of ATP to the 4'-position of a tetraacyldisaccharide 1-phosphate intermediate (termed DS-1-P) to form tetraacyldisaccharide 1,4'-bis-phosphate (lipid IVA). In Pasteurella multocida (strain Pm70), this protein is Tetraacyldisaccharide 4'-kinase.